Consider the following 1388-residue polypeptide: Rho-associated protein kinase 2 (1388 aa).

The tract at residues 1 to 24 is disordered; the sequence is MSRPPPTGKMPGAPEAVSGDGAGA. One can recognise a Protein kinase domain in the interval 92 to 354; it reads YDVVKVIGRG…VEEIKQHPFF (263 aa). ATP contacts are provided by residues 98 to 106 and Lys121; that span reads IGRGAFGEV. Asp214 functions as the Proton acceptor in the catalytic mechanism. The 69-residue stretch at 357-425 folds into the AGC-kinase C-terminal domain; it reads DQWNWDNIRE…YRENLLLSDS (69 aa). The interaction with PPP1R12A stretch occupies residues 363–784; the sequence is NIRETAAPVV…INELLKQKDV (422 aa). Residues 373–420 form an interaction with NPM1 region; sequence PELSSDIDSSNFDDIEDDKGDVETFPIPKAFVGNQLPFIGFTYYRENL. A Phosphothreonine; by ROCK2 modification is found at Thr414. Coiled coils occupy residues 439–1025 and 1053–1131; these read NEES…KQLL and DTDV…IGLD. Positions 497–573 constitute an REM-1 domain; that stretch reads TLRQLEREKA…LDETNALLRT (77 aa). The span at 512–530 shows a compositional bias: basic and acidic residues; that stretch reads NAEYQRKADHEADKKRNLE. The tract at residues 512 to 532 is disordered; sequence NAEYQRKADHEADKKRNLEND. Tyr722 is modified (phosphotyrosine; by SRC). Residues 979-1047 form the RhoBD domain; that stretch reads TSDVANLANE…LAEIMNRKEP (69 aa). Residues 979–1047 form an RHOA binding region; sequence TSDVANLANE…LAEIMNRKEP (69 aa). Phosphoserine is present on Ser1137. Residues 1150-1349 enclose the PH domain; the sequence is ESRLEGWLSL…WVSRLVKKIP (200 aa). Phosphothreonine is present on Thr1212. The Phorbol-ester/DAG-type zinc-finger motif lies at 1260–1315; it reads GHEFIPTLYHFPTNCEACMKPLWHMFKPPPALECRRCHIKCHKDHMDKKEEIIAPC. Positions 1345-1388 are disordered; sequence VKKIPKKPPAPDPFARSSPRTSMKIQQNQSIRRPSRQLAPNKPS. 2 positions are modified to phosphoserine: Ser1362 and Ser1374. A compositionally biased stretch (polar residues) spans 1362 to 1376; sequence SPRTSMKIQQNQSIR.

It belongs to the protein kinase superfamily. AGC Ser/Thr protein kinase family. Homodimer. Interacts with IRS1. Interacts with RAF1. Interacts with RHOA (activated by GTP). Interacts with RHOB and RHOC. Interacts with PPP1R12A. Interacts with EP300. Interacts with CHORDC1. Interacts with BRCA2. Interacts with NPM1; this interaction enhances ROCK2 activity. Interacts with SORL1. Interacts with PJVK. It depends on Mg(2+) as a cofactor. Autophosphorylated. Phosphorylation at Tyr-722 reduces its binding to RHOA and is crucial for focal adhesion dynamics. Dephosphorylation by PTPN11 stimulates its RHOA binding activity. Post-translationally, cleaved by granzyme B during apoptosis. This leads to constitutive activation of the kinase and membrane blebbing. As to expression, highly expressed in whole brain and in cerebellum, and at lower levels in heart and lung. Detected at low levels in skeletal muscle, spleen, liver, kidney and pancreas.

It is found in the cytoplasm. The protein localises to the cell membrane. It localises to the nucleus. The protein resides in the cytoskeleton. Its subcellular location is the microtubule organizing center. It is found in the centrosome. The enzyme catalyses L-seryl-[protein] + ATP = O-phospho-L-seryl-[protein] + ADP + H(+). It catalyses the reaction L-threonyl-[protein] + ATP = O-phospho-L-threonyl-[protein] + ADP + H(+). Activated by RHOA binding. Inhibited by Y-27632. Its function is as follows. Protein kinase which is a key regulator of actin cytoskeleton and cell polarity. Involved in regulation of smooth muscle contraction, actin cytoskeleton organization, stress fiber and focal adhesion formation, neurite retraction, cell adhesion and motility via phosphorylation of ADD1, BRCA2, CNN1, EZR, DPYSL2, EP300, MSN, MYL9/MLC2, NPM1, RDX, PPP1R12A and VIM. Phosphorylates SORL1 and IRF4. Acts as a negative regulator of VEGF-induced angiogenic endothelial cell activation. Positively regulates the activation of p42/MAPK1-p44/MAPK3 and of p90RSK/RPS6KA1 during myogenic differentiation. Plays an important role in the timely initiation of centrosome duplication. Inhibits keratinocyte terminal differentiation. May regulate closure of the eyelids and ventral body wall through organization of actomyosin bundles. Plays a critical role in the regulation of spine and synaptic properties in the hippocampus. Plays an important role in generating the circadian rhythm of the aortic myofilament Ca(2+) sensitivity and vascular contractility by modulating the myosin light chain phosphorylation. The polypeptide is Rho-associated protein kinase 2 (ROCK2) (Bos taurus (Bovine)).